Reading from the N-terminus, the 453-residue chain is Glucose N-acetyltransferase 1-B (453 aa).

At 1-8 the chain is on the cytoplasmic side; it reads MLKRKVRY. The chain crosses the membrane as a helical; Signal-anchor for type II membrane protein span at residues 9-29; that stretch reads LLLIVVVFTGIILSVEAIMRF. Over 30-453 the chain is Lumenal; the sequence is QLNKNVDYYL…LESRAICQVN (424 aa). N-linked (GlcNAc...) asparagine glycosylation is found at Asn108, Asn126, and Asn176. The DXD signature appears at 187–189; sequence DND.

Belongs to the GNT1 family.

The protein resides in the golgi apparatus membrane. Its subcellular location is the vacuole membrane. Its function is as follows. N-acetylglucosaminyltransferase involved in the Golgi-specific modification of N-linked glycans. The polypeptide is Glucose N-acetyltransferase 1-B (GNT1-B) (Kluyveromyces lactis (strain ATCC 8585 / CBS 2359 / DSM 70799 / NBRC 1267 / NRRL Y-1140 / WM37) (Yeast)).